A 125-amino-acid polypeptide reads, in one-letter code: Small ribosomal subunit protein bS16 (125 aa).

Residues Glu-87 to Asp-125 form a disordered region. A compositionally biased stretch (basic and acidic residues) spans Ala-103–Glu-115.

The protein belongs to the bacterial ribosomal protein bS16 family.

In Prochlorococcus marinus (strain MIT 9211), this protein is Small ribosomal subunit protein bS16.